Consider the following 326-residue polypeptide: Membrane-associated kinase regulator 5 (326 aa).

Disordered stretches follow at residues 188–239 and 267–326; these read TKKQ…GMSP and GSRE…KISD. 2 stretches are compositionally biased toward low complexity: residues 190 to 202 and 270 to 305; these read KQSSSTITSPTSS and ESSLLSRSTSESSSQEKLSTSSSEDSYLFSRISSDS.

As to expression, expressed in roots.

The protein resides in the cell membrane. It is found in the cytoplasm. Its subcellular location is the cytosol. In terms of biological role, positive effector of CLE45 peptide signaling. Post-transcriptionally regulated amplifier of the CLE45 peptide signal that acts downstream of BAM3 in the regulation of the transition of root protophloem cells from proliferation to differentiation; thus preventing primary root elongation but stimulating lateral roots development. The sequence is that of Membrane-associated kinase regulator 5 from Arabidopsis thaliana (Mouse-ear cress).